The primary structure comprises 191 residues: Sporulation-specific protein (191 aa).

In terms of biological role, not essential for sporulation. The sequence is that of Sporulation-specific protein (SPR6) from Saccharomyces cerevisiae (strain ATCC 204508 / S288c) (Baker's yeast).